The primary structure comprises 344 residues: MYKKKKSYQSLKNLNTFSINVTAKKIIFVKTIQSLMKIWKTCNLSNIPYIILGEGSNVLFLENYAGVVIINRIKGIRIEEKKKNWLLHVFSGEKWHDLVKYTLRMGFFGLENLALIPGSVGSAAIQNIGAYGLELKNICQYVDVISLENGKTIRLKKKTCNFSYRSSIFKYKYNNGYAVIAVGIKIKKNWKPVIFSSLLKSKKILEINAYKIFNIVCQIRKKKLPNLKKLGNAGSFFKNPIITSKKTKKILSSYMKMPYYIQKNGFIKIPAAWLIEKYNFKNIQIGDAAIYKKQKLILINLKKANSKDILKLAQIIQKCILKKFGIYLEPEVDFINSLGKVKLL.

Residues 19 to 189 (INVTAKKIIF…IAVGIKIKKN (171 aa)) form the FAD-binding PCMH-type domain. Arg-165 is an active-site residue. Catalysis depends on Ser-235, which acts as the Proton donor. The active site involves Glu-331.

This sequence belongs to the MurB family. Requires FAD as cofactor.

It is found in the cytoplasm. The catalysed reaction is UDP-N-acetyl-alpha-D-muramate + NADP(+) = UDP-N-acetyl-3-O-(1-carboxyvinyl)-alpha-D-glucosamine + NADPH + H(+). It functions in the pathway cell wall biogenesis; peptidoglycan biosynthesis. Its function is as follows. Cell wall formation. This chain is UDP-N-acetylenolpyruvoylglucosamine reductase, found in Buchnera aphidicola subsp. Schizaphis graminum (strain Sg).